Here is a 312-residue protein sequence, read N- to C-terminus: Glyoxylate/hydroxypyruvate reductase A (312 aa).

Arginine 227 is a catalytic residue. Residue histidine 275 is the Proton donor of the active site.

The protein belongs to the D-isomer specific 2-hydroxyacid dehydrogenase family. GhrA subfamily.

It localises to the cytoplasm. The catalysed reaction is glycolate + NADP(+) = glyoxylate + NADPH + H(+). It catalyses the reaction (R)-glycerate + NAD(+) = 3-hydroxypyruvate + NADH + H(+). The enzyme catalyses (R)-glycerate + NADP(+) = 3-hydroxypyruvate + NADPH + H(+). Catalyzes the NADPH-dependent reduction of glyoxylate and hydroxypyruvate into glycolate and glycerate, respectively. This Escherichia coli (strain 55989 / EAEC) protein is Glyoxylate/hydroxypyruvate reductase A.